We begin with the raw amino-acid sequence, 315 residues long: MLKNKILATTLSVSLLAPLANPLLENAKAANDTEDIGKGNDVEIIKRTEDKTSNKWGVTQNIQFDFVKDKKYNKDALILKMQGFISSRTTYYNYKNTNHIKSMRWPFQYNIGLKTNDKYVSLINYLPKNKIESTNVSQTLGYNIGGNFQSAPSLGGNGSFNYSKSISYTQQNYVSEVEQQNSKSVLWGVKANSFATESGQKSAFDSDLFVGYKPHSKDPRDYFVPDSELPPLVQSGFNPSFIATVSHEKGSSDTSEFEITYGRNMDVTHAIKRSTHYGNSYLDGHRVHNAFKNRNYTVKYEVNWKTHEIKVKGQN.

The first 29 residues, 1–29 (MLKNKILATTLSVSLLAPLANPLLENAKA), serve as a signal peptide directing secretion.

This sequence belongs to the aerolysin family. As to quaternary structure, toxicity requires sequential binding and synergistic association of a class S and a class F component which form heterooligomeric complexes. HlgC (class S) associates with HlgB (class F) thus forming an CB toxin.

Its function is as follows. Toxin that seems to act by forming pores in the membrane of the cell. Has a hemolytic and a leucotoxic activity. This Staphylococcus aureus (strain MRSA252) protein is Gamma-hemolysin component C (hlgC).